The following is a 325-amino-acid chain: Helicase VP6-A (325 aa).

Disordered regions lie at residues 1–126 and 175–231; these read MLLA…TNGR and GVAE…PARI. Composition is skewed to basic and acidic residues over residues 8 to 18, 32 to 54, 61 to 79, and 92 to 105; these read VIKRSSEELKQ, EGGK…KDGE, GQKE…DRRI, and PGER…RGDG. Lys106 is a binding site for ATP. Positions 106–122 are enriched in gly residues; that stretch reads KVGGGGGDADAGVGATG. Residues 175–229 are compositionally biased toward basic and acidic residues; sequence GVAEQTERLRDLRRKEKNGTHAKAVERGGRKQRKESHGDAQREGVEEEKTSEEPA.

The protein belongs to the orbivirus VP6 family. Homohexamer.

It is found in the virion. It catalyses the reaction ATP + H2O = ADP + phosphate + H(+). Its function is as follows. ATP dependent RNA helicase essential for RNA packaging and viral transcription. Possesses ss- and dsRNA-binding capacity. This is Helicase VP6-A (Segment-9) from Bluetongue virus 11 (isolate USA) (BTV 11).